The following is a 264-amino-acid chain: Thymidylate synthase (264 aa).

R21 serves as a coordination point for dUMP. H51 contacts (6R)-5,10-methylene-5,6,7,8-tetrahydrofolate. Position 126 to 127 (126 to 127 (RR)) interacts with dUMP. C146 (nucleophile) is an active-site residue. Residues 166 to 169 (RSAD), N177, and 207 to 209 (HLY) contribute to the dUMP site. D169 serves as a coordination point for (6R)-5,10-methylene-5,6,7,8-tetrahydrofolate. (6R)-5,10-methylene-5,6,7,8-tetrahydrofolate is bound at residue A263.

Belongs to the thymidylate synthase family. Bacterial-type ThyA subfamily. Homodimer.

The protein resides in the cytoplasm. The enzyme catalyses dUMP + (6R)-5,10-methylene-5,6,7,8-tetrahydrofolate = 7,8-dihydrofolate + dTMP. It participates in pyrimidine metabolism; dTTP biosynthesis. In terms of biological role, catalyzes the reductive methylation of 2'-deoxyuridine-5'-monophosphate (dUMP) to 2'-deoxythymidine-5'-monophosphate (dTMP) while utilizing 5,10-methylenetetrahydrofolate (mTHF) as the methyl donor and reductant in the reaction, yielding dihydrofolate (DHF) as a by-product. This enzymatic reaction provides an intracellular de novo source of dTMP, an essential precursor for DNA biosynthesis. The polypeptide is Thymidylate synthase (Bartonella henselae (strain ATCC 49882 / DSM 28221 / CCUG 30454 / Houston 1) (Rochalimaea henselae)).